A 257-amino-acid chain; its full sequence is Imidazole glycerol phosphate synthase subunit HisF (257 aa).

Catalysis depends on residues Asp11 and Asp130.

It belongs to the HisA/HisF family. As to quaternary structure, heterodimer of HisH and HisF.

The protein localises to the cytoplasm. It carries out the reaction 5-[(5-phospho-1-deoxy-D-ribulos-1-ylimino)methylamino]-1-(5-phospho-beta-D-ribosyl)imidazole-4-carboxamide + L-glutamine = D-erythro-1-(imidazol-4-yl)glycerol 3-phosphate + 5-amino-1-(5-phospho-beta-D-ribosyl)imidazole-4-carboxamide + L-glutamate + H(+). Its pathway is amino-acid biosynthesis; L-histidine biosynthesis; L-histidine from 5-phospho-alpha-D-ribose 1-diphosphate: step 5/9. IGPS catalyzes the conversion of PRFAR and glutamine to IGP, AICAR and glutamate. The HisF subunit catalyzes the cyclization activity that produces IGP and AICAR from PRFAR using the ammonia provided by the HisH subunit. The protein is Imidazole glycerol phosphate synthase subunit HisF of Aliivibrio fischeri (strain ATCC 700601 / ES114) (Vibrio fischeri).